The following is an 864-amino-acid chain: Leucine--tRNA ligase (864 aa).

The short motif at 42 to 52 is the 'HIGH' region element; it reads PYPSGRLHMGH. Positions 621–625 match the 'KMSKS' region motif; sequence KMSKS. Residue K624 coordinates ATP.

It belongs to the class-I aminoacyl-tRNA synthetase family.

It localises to the cytoplasm. The enzyme catalyses tRNA(Leu) + L-leucine + ATP = L-leucyl-tRNA(Leu) + AMP + diphosphate. This is Leucine--tRNA ligase from Alkalilimnicola ehrlichii (strain ATCC BAA-1101 / DSM 17681 / MLHE-1).